A 225-amino-acid polypeptide reads, in one-letter code: Putative tyrosine-protein phosphatase OCA1 (225 aa).

Residues 1-11 are compositionally biased toward acidic residues; sequence MTDNCREDDDN. Positions 1–24 are disordered; it reads MTDNCREDDDNLGTSGDNALSAPT. Residues 12 to 24 are compositionally biased toward polar residues; sequence LGTSGDNALSAPT. A Tyrosine-protein phosphatase domain is found at 42–196; sequence NFCPVERYLY…FDTKSVTIDK (155 aa). The active-site Phosphocysteine intermediate is the Cys138.

It belongs to the protein-tyrosine phosphatase family.

Its subcellular location is the cytoplasm. The catalysed reaction is O-phospho-L-tyrosyl-[protein] + H2O = L-tyrosyl-[protein] + phosphate. In terms of biological role, putative tyrosine-protein phosphatase required for protection against superoxide stress. This chain is Putative tyrosine-protein phosphatase OCA1 (OCA1), found in Eremothecium gossypii (strain ATCC 10895 / CBS 109.51 / FGSC 9923 / NRRL Y-1056) (Yeast).